A 445-amino-acid polypeptide reads, in one-letter code: Chromosome partition protein MukF (445 aa).

Positions 213–241 (LSETSATLRELQDTLQAAGDELQTQILDI) are leucine-zipper.

This sequence belongs to the MukF family. As to quaternary structure, interacts, and probably forms a ternary complex, with MukE and MukB via its C-terminal region. The complex formation is stimulated by calcium or magnesium. It is required for an interaction between MukE and MukB.

The protein localises to the cytoplasm. The protein resides in the nucleoid. Its function is as follows. Involved in chromosome condensation, segregation and cell cycle progression. May participate in facilitating chromosome segregation by condensation DNA from both sides of a centrally located replisome during cell division. Not required for mini-F plasmid partitioning. Probably acts via its interaction with MukB and MukE. Overexpression results in anucleate cells. It has a calcium binding activity. The protein is Chromosome partition protein MukF of Vibrio cholerae serotype O1 (strain ATCC 39315 / El Tor Inaba N16961).